A 428-amino-acid chain; its full sequence is uncharacterized protein (428 aa).

A disordered region spans residues 1–49 (MRTQTFPPSSSSSRTTHPKKNRHSSNSSSMALVTPAKSSTGAAPKQSSQ). Positions 24-49 (SSNSSSMALVTPAKSSTGAAPKQSSQ) are enriched in polar residues.

This is an uncharacterized protein from Caenorhabditis elegans.